An 879-amino-acid chain; its full sequence is Bifunctional uridylyltransferase/uridylyl-removing enzyme (879 aa).

The tract at residues 1-340 (MANVQEDKDF…GTQDLQHAEH (340 aa)) is uridylyltransferase. A uridylyl-removing region spans residues 341–700 (ISDDFAVANK…IGDENNYGTT (360 aa)). One can recognise an HD domain in the interval 458 to 580 (VDEHTFRLVR…VSTPERLDYL (123 aa)). 2 ACT domains span residues 701 to 782 (ELFI…STKR) and 809 to 879 (TFEL…DLEF).

This sequence belongs to the GlnD family. Requires Mg(2+) as cofactor.

It carries out the reaction [protein-PII]-L-tyrosine + UTP = [protein-PII]-uridylyl-L-tyrosine + diphosphate. The catalysed reaction is [protein-PII]-uridylyl-L-tyrosine + H2O = [protein-PII]-L-tyrosine + UMP + H(+). With respect to regulation, uridylyltransferase (UTase) activity is inhibited by glutamine, while glutamine activates uridylyl-removing (UR) activity. In terms of biological role, modifies, by uridylylation and deuridylylation, the PII regulatory proteins (GlnB and homologs), in response to the nitrogen status of the cell that GlnD senses through the glutamine level. Under low glutamine levels, catalyzes the conversion of the PII proteins and UTP to PII-UMP and PPi, while under higher glutamine levels, GlnD hydrolyzes PII-UMP to PII and UMP (deuridylylation). Thus, controls uridylylation state and activity of the PII proteins, and plays an important role in the regulation of nitrogen assimilation and metabolism. This is Bifunctional uridylyltransferase/uridylyl-removing enzyme from Idiomarina loihiensis (strain ATCC BAA-735 / DSM 15497 / L2-TR).